The chain runs to 109 residues: Tetraspanin-31 (109 aa).

Residues 1-12 (MVCGGFACSKNA) lie on the Cytoplasmic side of the membrane. Residues 13–33 (LCALNVVYMLVGLLLIGVAAW) traverse the membrane as a helical segment. The Extracellular portion of the chain corresponds to 34–44 (AKGLGLVSSIH). A helical transmembrane segment spans residues 45-65 (IIGGVIAVGVFLLLIAVAGLV). Residues 66 to 72 (GAVNHHQ) are Cytoplasmic-facing. A helical transmembrane segment spans residues 73–93 (VLLFFYMIILGLVFIFQFGIS). The Extracellular segment spans residues 94–109 (CSCLAINLSKQAGIIN). Residue Asn-100 is glycosylated (N-linked (GlcNAc...) asparagine).

The protein belongs to the tetraspanin (TM4SF) family.

It localises to the membrane. In Sus scrofa (Pig), this protein is Tetraspanin-31 (TSPAN31).